The primary structure comprises 271 residues: Ferric vulnibactin reductase VuuB (271 aa).

One can recognise an FAD-binding FR-type domain in the interval 8-131 (VYPMLLDFVR…IGPAGPDPLI (124 aa)).

Belongs to the SIP oxidoreductase family. In terms of assembly, monomer. FAD is required as a cofactor.

It is found in the cytoplasm. It carries out the reaction 2 a Fe(II)-siderophore + NAD(+) + H(+) = 2 a Fe(III)-siderophore + NADH. In terms of biological role, ferric-siderophore reductase involved in iron removal from the siderophores after their transport into the cell. Acts as a major ferric-vulnibactin reductase catalyzing the reduction of Fe(3+)-vulnibactin, a catecholate siderophore synthesized by V.vulnificus. The protein is Ferric vulnibactin reductase VuuB of Vibrio vulnificus (strain CMCP6).